A 142-amino-acid polypeptide reads, in one-letter code: Large ribosomal subunit protein uL13 (142 aa).

Belongs to the universal ribosomal protein uL13 family. Part of the 50S ribosomal subunit.

In terms of biological role, this protein is one of the early assembly proteins of the 50S ribosomal subunit, although it is not seen to bind rRNA by itself. It is important during the early stages of 50S assembly. This Psychrobacter cryohalolentis (strain ATCC BAA-1226 / DSM 17306 / VKM B-2378 / K5) protein is Large ribosomal subunit protein uL13.